We begin with the raw amino-acid sequence, 309 residues long: Probable cell division protein WhiA (309 aa).

The H-T-H motif DNA-binding region spans 275–309 (SLKELGELVPGGPISKSGINHRLRKINQYAEKLRA).

This sequence belongs to the WhiA family.

Functionally, involved in cell division and chromosome segregation. The protein is Probable cell division protein WhiA of Pediococcus pentosaceus (strain ATCC 25745 / CCUG 21536 / LMG 10740 / 183-1w).